Reading from the N-terminus, the 217-residue chain is GTP-binding protein Rit2 (217 aa).

GTP contacts are provided by residues 27–34 (GAGGVGKS), 74–78 (DTAGQ), and 133–136 (NKID).

It belongs to the small GTPase superfamily. Ras family. Interacts with AFDN, the C-terminal domain of RALGDS and RLF, but not with RIN1 and PIK3CA. RLF binds exclusively to the active GTP-bound form. Binds calmodulin. Interacts with PLXNB3.

The protein resides in the nucleus. It is found in the cell membrane. The enzyme catalyses GTP + H2O = GDP + phosphate + H(+). Its activity is regulated as follows. Alternates between an inactive form bound to GDP and an active form bound to GTP. Functionally, binds and exchanges GTP and GDP. This chain is GTP-binding protein Rit2 (Rit2), found in Rattus norvegicus (Rat).